A 433-amino-acid polypeptide reads, in one-letter code: KH domain-containing, RNA-binding, signal transduction-associated protein 1 (433 aa).

The interval Met-1–Met-79 is disordered. Residues Gly-41 to Ala-76 show a composition bias toward low complexity. The involved in homodimerization stretch occupies residues Glu-82–Met-243. One can recognise a KH domain in the interval Gln-171 to Lys-197. Disordered stretches follow at residues Gly-259–Arg-305, Ala-317–Pro-351, and Gln-403–Tyr-433. Over residues Ala-277–Arg-300 the composition is skewed to pro residues. The span at Val-329–Ile-342 shows a compositional bias: low complexity. A compositionally biased stretch (basic and acidic residues) spans Ala-424 to Tyr-433.

Belongs to the KHDRBS family. As to quaternary structure, self-associates to form homooligomers when bound to RNA, oligomerization appears to be limited when binding to proteins. In terms of processing, tyrosine phosphorylated by several non-receptor tyrosine kinases including LCK, FYN and JAK3. Post-translationally, acetylated. Positively correlates with ability to bind RNA. Methylated by HRMT1L2. Required for nuclear localization.

It is found in the nucleus. The protein resides in the cytoplasm. It localises to the membrane. Recruited and tyrosine phosphorylated by several receptor systems, for example the T-cell, leptin and insulin receptors. Once phosphorylated, functions as an adapter protein in signal transduction cascades by binding to SH2 and SH3 domain-containing proteins. Role in G2-M progression in the cell cycle. Represses CBP-dependent transcriptional activation apparently by competing with other nuclear factors for binding to CBP. Also acts as a putative regulator of mRNA stability and/or translation rates and mediates mRNA nuclear export. Plays a role in the regulation of alternative splicing and influences mRNA splice site selection and exon inclusion. This Gallus gallus (Chicken) protein is KH domain-containing, RNA-binding, signal transduction-associated protein 1.